The primary structure comprises 274 residues: Protein TIFY 11A (274 aa).

Disordered stretches follow at residues 49–95 (SLAL…SQPG) and 139–176 (PIND…QEQN). One can recognise a Tify domain in the interval 92–127 (SQPGSSQLTIFFGGKVLVYNEFPVDKAKEIMEVAKQ). The segment covering 139–150 (PINDENNNNKSS) has biased composition (polar residues). A coiled-coil region spans residues 161-185 (DNNHLTKEQQQQQEQNQIVERIARR). Residues 182-206 (IARRASLHRFFAKRKDRAVARAPYQ) carry the Jas motif. The Nuclear localization signal signature appears at 183-190 (ARRASLHR). The disordered stretch occupies residues 206–274 (QVNQNAGHHR…QSSKDLDLRL (69 aa)). The segment covering 249–274 (IKSDGDKDDIMKIEEGQSSKDLDLRL) has biased composition (basic and acidic residues).

It belongs to the TIFY/JAZ family. Homo- and heterodimer. Interacts with MYC2, MYC3, MYC4, AFPH2/NINJA, TIFY10A/JAZ1, TIFY10B/JAZ2, TIFY11B/JAZ6, TIFY5A/JAZ8 and TIFY3B/JAZ12. In terms of assembly, (Microbial infection) Interacts with the pathogenic Pseudomonas syringae HopZ1a protein. In terms of processing, (Microbial infection) Acetylated by Pseudomonas syringae HopZ1a. Ubiquitinated. Targeted for degradation by the SCF(COI1) E3 ubiquitin ligase-proteasome pathway during jasmonate signaling.

Its subcellular location is the nucleus. In terms of biological role, repressor of jasmonate responses. The polypeptide is Protein TIFY 11A (Arabidopsis thaliana (Mouse-ear cress)).